The chain runs to 200 residues: 7-methyl-GTP pyrophosphatase (200 aa).

The active-site Proton acceptor is the aspartate 75.

Belongs to the Maf family. YceF subfamily. A divalent metal cation serves as cofactor.

The protein resides in the cytoplasm. It catalyses the reaction N(7)-methyl-GTP + H2O = N(7)-methyl-GMP + diphosphate + H(+). In terms of biological role, nucleoside triphosphate pyrophosphatase that hydrolyzes 7-methyl-GTP (m(7)GTP). May have a dual role in cell division arrest and in preventing the incorporation of modified nucleotides into cellular nucleic acids. This chain is 7-methyl-GTP pyrophosphatase, found in Hydrogenovibrio crunogenus (strain DSM 25203 / XCL-2) (Thiomicrospira crunogena).